A 138-amino-acid chain; its full sequence is Endoribonuclease YbeY (138 aa).

Positions 98, 102, and 108 each coordinate Zn(2+).

The protein belongs to the endoribonuclease YbeY family. Zn(2+) serves as cofactor.

It localises to the cytoplasm. In terms of biological role, single strand-specific metallo-endoribonuclease involved in late-stage 70S ribosome quality control and in maturation of the 3' terminus of the 16S rRNA. The protein is Endoribonuclease YbeY of Thermosipho melanesiensis (strain DSM 12029 / CIP 104789 / BI429).